The sequence spans 232 residues: Orotidine 5'-phosphate decarboxylase (232 aa).

Residues Asp-11, Lys-32, 59–68, Thr-118, Arg-180, Gln-189, Gly-209, and Arg-210 contribute to the substrate site; that span reads DLKFHDIPNT. Lys-61 serves as the catalytic Proton donor.

The protein belongs to the OMP decarboxylase family. Type 1 subfamily. Homodimer.

It carries out the reaction orotidine 5'-phosphate + H(+) = UMP + CO2. It participates in pyrimidine metabolism; UMP biosynthesis via de novo pathway; UMP from orotate: step 2/2. Its function is as follows. Catalyzes the decarboxylation of orotidine 5'-monophosphate (OMP) to uridine 5'-monophosphate (UMP). In Gloeothece citriformis (strain PCC 7424) (Cyanothece sp. (strain PCC 7424)), this protein is Orotidine 5'-phosphate decarboxylase.